Here is a 111-residue protein sequence, read N- to C-terminus: Capsid assembly protein Gp31 (111 aa).

As to quaternary structure, homoheptamer. Forms a stable complex with groEL in the presence of ATP.

In terms of biological role, essential for proper capsid assembly. In absence of Gp31 the major capsid protein (Gp23) assembles into 'lumps'. Acts as a co-chaperonin with the host groEL protein. This Escherichia coli (Bacteriophage T4) protein is Capsid assembly protein Gp31 (31).